The sequence spans 125 residues: Photosystem I reaction center subunit IV, chloroplastic (125 aa).

Residues 1–34 (MASIASSVAVRLGLTQVLPNKNFSSPRSTRLVVR) constitute a chloroplast transit peptide. Residues 42–57 (APAAASPEGEAPKAAA) are compositionally biased toward low complexity. Positions 42 to 68 (APAAASPEGEAPKAAAKPPPIGPKRGS) are disordered.

This sequence belongs to the PsaE family.

The protein resides in the plastid. Its subcellular location is the chloroplast thylakoid membrane. Stabilizes the interaction between PsaC and the PSI core, assists the docking of the ferredoxin to PSI and interacts with ferredoxin-NADP oxidoreductase. This chain is Photosystem I reaction center subunit IV, chloroplastic (PSAE-1), found in Spinacia oleracea (Spinach).